The sequence spans 117 residues: UPF0125 protein VV0820 (117 aa).

The tract at residues 90 to 117 (RKRAEQAKESGAADPVTGGKPSPLRKAD) is disordered.

The protein belongs to the UPF0125 (RnfH) family.

The protein is UPF0125 protein VV0820 of Vibrio vulnificus (strain YJ016).